The sequence spans 224 residues: V-type ATP synthase subunit D (224 aa).

Positions 205–214 (AKAKQQRKDI) are enriched in basic and acidic residues. The tract at residues 205–224 (AKAKQQRKDIQSGNHGSAAD) is disordered. The segment covering 215–224 (QSGNHGSAAD) has biased composition (polar residues).

Belongs to the V-ATPase D subunit family.

Produces ATP from ADP in the presence of a proton gradient across the membrane. The sequence is that of V-type ATP synthase subunit D from Deinococcus deserti (strain DSM 17065 / CIP 109153 / LMG 22923 / VCD115).